A 478-amino-acid chain; its full sequence is NAD-dependent malic enzyme (478 aa).

The ACT domain maps to Thr-12–Arg-86. Catalysis depends on Tyr-114, which acts as the Proton donor. The active-site Proton acceptor is Lys-169. 3 residues coordinate a divalent metal cation: Glu-211, Asp-212, and Asp-237. NAD(+)-binding positions include Ile-270 to Ala-273, Asn-363, and Asn-393.

It belongs to the malic enzymes family. As to quaternary structure, homotetramer. It depends on Mg(2+) as a cofactor. Mn(2+) serves as cofactor.

It carries out the reaction (S)-malate + NAD(+) = pyruvate + CO2 + NADH. It catalyses the reaction oxaloacetate + H(+) = pyruvate + CO2. Its activity is regulated as follows. The activity is enhanced 5-7 times by ammonium and potassium. In terms of biological role, in addition to the NAD-dependent oxidative decarboxylation of L-malate, the enzyme catalyzes the decarboxylation of oxaloacetate. The protein is NAD-dependent malic enzyme of Geobacillus stearothermophilus (Bacillus stearothermophilus).